The following is a 136-amino-acid chain: MFKGILLCVLFAVLSANPLSQPEGFADEERDVRGLASFLGKALKAGLKNDDDVNERDVRGFASFLGKALKAALKIGANALGGAPQQREANDERRFADDEDDVNERDVRGFGSFLGKALKAALKIGANALGGAPQQR.

Residues 1–26 (MFKGILLCVLFAVLSANPLSQPEGFA) form the signal peptide. Residues 27–136 (DEERDVRGLA…NALGGAPQQR (110 aa)) constitute a propeptide that is removed on maturation. The tract at residues 82-101 (GAPQQREANDERRFADDEDD) is disordered.

This sequence belongs to the gastrin/cholecystokinin family. As to expression, expressed by the skin glands.

Its subcellular location is the secreted. The pharmacological activities of caerulein are quite similar to the physiological activities of gastrin and related peptides. This Xenopus laevis (African clawed frog) protein is Preprocaerulein type I'.